Consider the following 335-residue polypeptide: tRNA N6-adenosine threonylcarbamoyltransferase (335 aa).

Fe cation contacts are provided by H111 and H115. Substrate is bound by residues L134–G138, D167, G180, and N270. D298 contributes to the Fe cation binding site.

Belongs to the KAE1 / TsaD family. The cofactor is Fe(2+).

The protein resides in the cytoplasm. It carries out the reaction L-threonylcarbamoyladenylate + adenosine(37) in tRNA = N(6)-L-threonylcarbamoyladenosine(37) in tRNA + AMP + H(+). Required for the formation of a threonylcarbamoyl group on adenosine at position 37 (t(6)A37) in tRNAs that read codons beginning with adenine. Is involved in the transfer of the threonylcarbamoyl moiety of threonylcarbamoyl-AMP (TC-AMP) to the N6 group of A37, together with TsaE and TsaB. TsaD likely plays a direct catalytic role in this reaction. The polypeptide is tRNA N6-adenosine threonylcarbamoyltransferase (Nitrosococcus oceani (strain ATCC 19707 / BCRC 17464 / JCM 30415 / NCIMB 11848 / C-107)).